The primary structure comprises 66 residues: Protein I177L (66 aa).

Asn11 carries an N-linked (GlcNAc...) asparagine; by host glycan.

This sequence belongs to the asfivirus I177L family.

Its subcellular location is the virion. This chain is Protein I177L, found in Ornithodoros (relapsing fever ticks).